The following is a 77-amino-acid chain: Small ribosomal subunit protein bS18 (77 aa).

Belongs to the bacterial ribosomal protein bS18 family. In terms of assembly, part of the 30S ribosomal subunit. Forms a tight heterodimer with protein bS6.

Its function is as follows. Binds as a heterodimer with protein bS6 to the central domain of the 16S rRNA, where it helps stabilize the platform of the 30S subunit. This is Small ribosomal subunit protein bS18 from Desulforamulus reducens (strain ATCC BAA-1160 / DSM 100696 / MI-1) (Desulfotomaculum reducens).